The primary structure comprises 278 residues: 4-diphosphocytidyl-2-C-methyl-D-erythritol kinase (278 aa).

Residue K9 is part of the active site. 93–103 (PISAGLAGGSS) contributes to the ATP binding site. D135 is a catalytic residue.

Belongs to the GHMP kinase family. IspE subfamily.

It catalyses the reaction 4-CDP-2-C-methyl-D-erythritol + ATP = 4-CDP-2-C-methyl-D-erythritol 2-phosphate + ADP + H(+). It participates in isoprenoid biosynthesis; isopentenyl diphosphate biosynthesis via DXP pathway; isopentenyl diphosphate from 1-deoxy-D-xylulose 5-phosphate: step 3/6. Catalyzes the phosphorylation of the position 2 hydroxy group of 4-diphosphocytidyl-2C-methyl-D-erythritol. This Finegoldia magna (strain ATCC 29328 / DSM 20472 / WAL 2508) (Peptostreptococcus magnus) protein is 4-diphosphocytidyl-2-C-methyl-D-erythritol kinase.